The chain runs to 474 residues: ATP synthase subunit beta (474 aa).

152–159 is an ATP binding site; it reads GGAGVGKT.

It belongs to the ATPase alpha/beta chains family. In terms of assembly, F-type ATPases have 2 components, CF(1) - the catalytic core - and CF(0) - the membrane proton channel. CF(1) has five subunits: alpha(3), beta(3), gamma(1), delta(1), epsilon(1). CF(0) has three main subunits: a(1), b(2) and c(9-12). The alpha and beta chains form an alternating ring which encloses part of the gamma chain. CF(1) is attached to CF(0) by a central stalk formed by the gamma and epsilon chains, while a peripheral stalk is formed by the delta and b chains.

Its subcellular location is the cell inner membrane. It carries out the reaction ATP + H2O + 4 H(+)(in) = ADP + phosphate + 5 H(+)(out). Its function is as follows. Produces ATP from ADP in the presence of a proton gradient across the membrane. The catalytic sites are hosted primarily by the beta subunits. This chain is ATP synthase subunit beta, found in Magnetococcus marinus (strain ATCC BAA-1437 / JCM 17883 / MC-1).